We begin with the raw amino-acid sequence, 75 residues long: Small ribosomal subunit protein bS18 (75 aa).

This sequence belongs to the bacterial ribosomal protein bS18 family. As to quaternary structure, part of the 30S ribosomal subunit. Forms a tight heterodimer with protein bS6.

Its function is as follows. Binds as a heterodimer with protein bS6 to the central domain of the 16S rRNA, where it helps stabilize the platform of the 30S subunit. In Dinoroseobacter shibae (strain DSM 16493 / NCIMB 14021 / DFL 12), this protein is Small ribosomal subunit protein bS18.